We begin with the raw amino-acid sequence, 246 residues long: MKEFITKHRDKFQKISAISGAGISAESGIPTFRGSEGLWKNFRAEDLATPQAFSKNPKLVWEWYLWRRNIIETKRPNPGHFALVELERIHPDFFLITQNVDGLHSQAGSKKLTEIHGNIFINRCISCGQESKETISENTTPLPPQCQNCNSFLRPGVVWFGESYDDFKLNLSIQRMKHTDLLLVLGTSGSVSMPVYLAQIAKDSGALLIEINPERSSFSSSVDLFLQGKTGEVLPELIREILDNPS.

Positions 1–245 (MKEFITKHRD…ELIREILDNP (245 aa)) constitute a Deacetylase sirtuin-type domain. Residue 20 to 39 (GAGISAESGIPTFRGSEGLW) coordinates NAD(+). Residues Tyr-64 and Arg-67 each contribute to the substrate site. 98 to 101 (QNVD) provides a ligand contact to NAD(+). The active-site Proton acceptor is the His-116. Zn(2+) contacts are provided by Cys-124, Cys-127, Cys-146, and Cys-149. NAD(+)-binding positions include 186–188 (GTS), 212–214 (NPE), and Thr-230.

This sequence belongs to the sirtuin family. Class III subfamily. The cofactor is Zn(2+).

Its subcellular location is the cytoplasm. The enzyme catalyses N(6)-acetyl-L-lysyl-[protein] + NAD(+) + H2O = 2''-O-acetyl-ADP-D-ribose + nicotinamide + L-lysyl-[protein]. It catalyses the reaction N(6)-succinyl-L-lysyl-[protein] + NAD(+) + H2O = 2''-O-succinyl-ADP-D-ribose + nicotinamide + L-lysyl-[protein]. NAD-dependent lysine deacetylase and desuccinylase that specifically removes acetyl and succinyl groups on target proteins. Modulates the activities of several proteins which are inactive in their acylated form. This chain is NAD-dependent protein deacylase, found in Leptospira interrogans serogroup Icterohaemorrhagiae serovar Lai (strain 56601).